Reading from the N-terminus, the 188-residue chain is MPHVNYEQIEYAVRLILEAIGEDPNREGLVDTPKRVAKMYAEVFAGLHEDPKQHFQTVFSEDHEELVLVKDIPFYSMCEHHLVPFFGVAHVAYIPRGGKVTGLSKLARAVETVARRPQLQERITATVADSIMETLDPYGVMVVVEAEHMCMTMRGVKKPGAKTVTTAVRGVFETDQVARAEVLSLIKG.

3 residues coordinate Zn(2+): C78, H81, and C150.

The protein belongs to the GTP cyclohydrolase I family. Homomer.

The catalysed reaction is GTP + H2O = 7,8-dihydroneopterin 3'-triphosphate + formate + H(+). The protein operates within cofactor biosynthesis; 7,8-dihydroneopterin triphosphate biosynthesis; 7,8-dihydroneopterin triphosphate from GTP: step 1/1. The chain is GTP cyclohydrolase 1 from Geobacillus sp. (strain WCH70).